The chain runs to 452 residues: Envelope glycoprotein D (452 aa).

An N-terminal signal peptide occupies residues 1–19; the sequence is MPAVLLVLYVNPPPSVCIL. Residues 20–405 lie on the Virion surface side of the membrane; the sequence is TQKLSLGLYN…NSTFVGISVG (386 aa). Residues N103 and N111 are each glycosylated (N-linked (GlcNAc...) asparagine; by host). Cystine bridges form between C138–C259, C176–C273, and C188–C197. The interval 331 to 365 is disordered; that stretch reads PDNHPGFDSVESEITQNKTDPKPGQADPKPNQPFK. N-linked (GlcNAc...) asparagine; by host glycosylation is found at N347 and N396. The chain crosses the membrane as a helical span at residues 406–422; sequence LGIAGLVLVGVILYVCL. The Intravirion portion of the chain corresponds to 423-452; it reads RRKKELKKSAQNGLTRLRSTFKDVKYTQLP.

This sequence belongs to the herpesviridae glycoprotein D family.

The protein localises to the virion membrane. Its function is as follows. Envelope glycoprotein that binds to host cell entry receptors, promoting the virus entry into host cells. May trigger fusion with host membrane, by recruiting the fusion machinery composed of gB and gH/gL. This Equine herpesvirus 1 (strain Ab4p) (EHV-1) protein is Envelope glycoprotein D (gD).